Here is a 776-residue protein sequence, read N- to C-terminus: MHNINNGYVPNREKTITKRKVRLVGGKAGNLVLENPVPTELRKVLTRTESPFGEFTNMTYTACTSQPDTFSAEGFTLRAAKYGRETEIVICITMYNEDEVAFARTMHGVMKNIAHLCSRHKSKIWGKDSWKKVQVIIVADGRNKVQQSVLELLTATGCYQENLARPYVNNSKVNAHLFEYTTQISIDENLKFKGDEKNLAPVQVLFCLKESNQKKINSHRWLFNAFCPVLDPNVIVLLDVGTKPDNHAIYNLWKAFDRDSNVAGAAGEIKAMKGKGWINLTNPLVASQNFEYKLSNILDKPLESLFGYISVLPGALSAYRYIALKNHDDGTGPLASYFKGEDLLCSHDKDKENTKANFFEANMYLAEDRILCWELVSKRNDNWVLKFVKSATGETDVPETIAEFLSQRRRWINGAFFAALYSLYHFRKIWTTDHSYARKFWLHVEEFIYQLVSLLFSFFSLSNFYLTFYFLTGSLVSYKSLGKKGGFWIFTLFNYLCIGVLTSLFIVSIGNRPHASKNIFKTLIILLTICALYALVVGFVFVINTIATFGTGGTSTYVLVSIVVSLLSTYGLYTLMSILYLDPWHMLTCSVQYFLMIPSYTCTLQIFAFCNTHDVSWGTKGDNNPKEDLSNQYIIEKNASGEFEAVIVDTNIDEDYLETLYNIRSKRSNKKVALGHSEKTPLDGDDYAKDVRTRVVLFWMIANLVFIMTMVQVYEPGDTGRNIYLAFILWAVAVLALVRAIGSLGYLIQTYARFFVESKSKWMKRGYTAPSHNPLN.

Transmembrane regions (helical) follow at residues 451 to 471 (LVSLLFSFFSLSNFYLTFYFL), 487 to 507 (FWIFTLFNYLCIGVLTSLFIV), 523 to 543 (LIILLTICALYALVVGFVFVI), 558 to 578 (VLVSIVVSLLSTYGLYTLMSI), 695 to 714 (VVLFWMIANLVFIMTMVQVY), and 723 to 743 (IYLAFILWAVAVLALVRAIGS).

Belongs to the chitin synthase family.

The protein resides in the cell membrane. It carries out the reaction [(1-&gt;4)-N-acetyl-beta-D-glucosaminyl](n) + UDP-N-acetyl-alpha-D-glucosamine = [(1-&gt;4)-N-acetyl-beta-D-glucosaminyl](n+1) + UDP + H(+). Its activity is regulated as follows. Requires proteolytic activation. Functionally, polymerizes chitin, a structural polymer of the cell wall and septum, by transferring the sugar moiety of UDP-GlcNAc to the non-reducing end of the growing chitin polymer. Also involved in forming cross walls in the hyphal phase. This is Chitin synthase 1 (CHS1) from Candida albicans (Yeast).